Here is a 327-residue protein sequence, read N- to C-terminus: dTDP-4-dehydrorhamnose reductase (327 aa).

The interval 1–22 (MDLINGMGTSPGYWRTPREPGN) is disordered. NADH contacts are provided by residues 43-45 (GMV), 69-70 (DI), and 91-93 (AYT). Residues 44-45 (MV), 69-70 (DI), and 91-93 (AYT) each bind NADPH. Position 132–133 (132–133 (TD)) interacts with dTDP-beta-L-rhamnose. Residues Tyr-157 and Lys-161 each contribute to the NADH site. Residues Tyr-157 and Lys-161 each contribute to the NADPH site. The Proton donor/acceptor role is filled by Tyr-157. Residue Trp-182 coordinates dTDP-beta-L-rhamnose. The span at 264–276 (PERVRPCGSDRHP) shows a compositional bias: basic and acidic residues. The tract at residues 264–292 (PERVRPCGSDRHPRPAPRPSYTVLSSQRS) is disordered.

It belongs to the dTDP-4-dehydrorhamnose reductase family. Mg(2+) is required as a cofactor.

The enzyme catalyses dTDP-beta-L-rhamnose + NADP(+) = dTDP-4-dehydro-beta-L-rhamnose + NADPH + H(+). The protein operates within carbohydrate biosynthesis; dTDP-L-rhamnose biosynthesis. Its function is as follows. Involved in the biosynthesis of the dTDP-L-rhamnose which is a component of the critical linker, D-N-acetylglucosamine-L-rhamnose disaccharide, which connects the galactan region of arabinogalactan to peptidoglycan via a phosphodiester linkage. Catalyzes the reduction of dTDP-6-deoxy-L-lyxo-4-hexulose to yield dTDP-L-rhamnose. This chain is dTDP-4-dehydrorhamnose reductase, found in Mycolicibacterium smegmatis (strain ATCC 700084 / mc(2)155) (Mycobacterium smegmatis).